The chain runs to 262 residues: MVRGPKKHLKRVAAPHHWLLDKLSGTYAPKPSPGPHKARECLPLIVFLRNRLKYALNGREVKAILMQRLIKVDGKVRTDSTFPTGFMDVISVEKTGEHFRLVYDIKGRFTVHRITAEEAKYKLCKVKRVQLGAKGVPFLVTHDGRTIRYPDPLIKVNDTIKLNLETNKIESFIKFDTSAQVMVTGGRNMGRVGTIVHREHHLGSFEIIHVKDALDREFATRLSNVFVIGETGKSWISLPKGKGVKLSITEERDRRRALKGLA.

In terms of domain architecture, S4 RNA-binding spans 42–105; it reads LPLIVFLRNR…GEHFRLVYDI (64 aa).

Belongs to the eukaryotic ribosomal protein eS4 family. As to quaternary structure, component of the small ribosomal subunit (SSU). Mature yeast ribosomes consist of a small (40S) and a large (60S) subunit. The 40S small subunit contains 1 molecule of ribosomal RNA (18S rRNA) and at least 33 different proteins. The large 60S subunit contains 3 rRNA molecules (25S, 5.8S and 5S rRNA) and at least 46 different proteins.

Its subcellular location is the cytoplasm. Its function is as follows. Component of the ribosome, a large ribonucleoprotein complex responsible for the synthesis of proteins in the cell. The small ribosomal subunit (SSU) binds messenger RNAs (mRNAs) and translates the encoded message by selecting cognate aminoacyl-transfer RNA (tRNA) molecules. The large subunit (LSU) contains the ribosomal catalytic site termed the peptidyl transferase center (PTC), which catalyzes the formation of peptide bonds, thereby polymerizing the amino acids delivered by tRNAs into a polypeptide chain. The nascent polypeptides leave the ribosome through a tunnel in the LSU and interact with protein factors that function in enzymatic processing, targeting, and the membrane insertion of nascent chains at the exit of the ribosomal tunnel. This is Small ribosomal subunit protein eS4A (rps401) from Schizosaccharomyces pombe (strain 972 / ATCC 24843) (Fission yeast).